We begin with the raw amino-acid sequence, 239 residues long: Serine protease SplD (239 aa).

Residues 1–36 (MNKNIIIKSIAALTILTSITGVGTTVVDGIQQTAKA) form the signal peptide. Catalysis depends on charge relay system residues histidine 75, aspartate 114, and serine 192.

This sequence belongs to the peptidase S1B family.

Its subcellular location is the secreted. This Staphylococcus aureus (strain COL) protein is Serine protease SplD (splD).